We begin with the raw amino-acid sequence, 512 residues long: Mesoderm induction early response protein 1 (512 aa).

Residues 1 to 16 are compositionally biased toward low complexity; sequence MAEPSVESSSPGGSAT. Disordered regions lie at residues 1–63 and 75–173; these read MAEP…REGD and YGST…EDYI. The residue at position 10 (S10) is a Phosphoserine. Positions 17–36 are enriched in basic and acidic residues; the sequence is SDDHEFDPSADMLVHDFDDE. 2 stretches are compositionally biased toward acidic residues: residues 37–46 and 83–105; these read RTLEEEEMME and EEDE…DNDD. Polar residues predominate over residues 129–144; it reads QSSNDDPSQSVASQDA. Phosphoserine is present on S141. Residue Y155 is modified to Phosphotyrosine. Phosphoserine occurs at positions 160 and 166. A compositionally biased stretch (acidic residues) spans 160–173; that stretch reads SEVEEESEEDEDYI. The 99-residue stretch at 180–278 folds into the ELM2 domain; it reads KEIMVGSMFQ…EALRRLRFNV (99 aa). The tract at residues 180 to 284 is interaction with HDAC1; it reads KEIMVGSMFQ…RFNVKAAREE (105 aa). K239 participates in a covalent cross-link: Glycyl lysine isopeptide (Lys-Gly) (interchain with G-Cter in SUMO2). The SANT domain occupies 283 to 335; the sequence is EELSVWTEEECRNFEQGLKAYGKDFHLIQANKVRTRSVGECVAFYYMWKKSER. The tract at residues 366 to 512 is disordered; sequence ESESAASSRA…KFEELENTDD (147 aa). Phosphoserine occurs at positions 367, 369, and 377. Polar residues predominate over residues 396-409; sequence TVSTTNQNGVSSNG. A compositionally biased stretch (basic and acidic residues) spans 414-423; it reads LNKEEVKVEG. K420 is covalently cross-linked (Glycyl lysine isopeptide (Lys-Gly) (interchain with G-Cter in SUMO2)). The residue at position 448 (T448) is a Phosphothreonine. A compositionally biased stretch (basic and acidic residues) spans 462–475; that stretch reads ARNENDFDEKSERP. Over residues 482 to 494 the composition is skewed to polar residues; the sequence is NSNGKESPGSSEF. Phosphoserine occurs at positions 483, 488, and 491.

Interacts with HDAC1. Part of a complex containing at least CDYL, MIER1, MIER2, HDAC1 and HDAC2.

Its subcellular location is the nucleus. Transcriptional repressor regulating the expression of a number of genes including SP1 target genes. Probably functions through recruitment of HDAC1 a histone deacetylase involved in chromatin silencing. The chain is Mesoderm induction early response protein 1 (MIER1) from Pongo abelii (Sumatran orangutan).